Reading from the N-terminus, the 132-residue chain is Small ribosomal subunit protein uS8 (132 aa).

Belongs to the universal ribosomal protein uS8 family. In terms of assembly, part of the 30S ribosomal subunit. Contacts proteins S5 and S12.

In terms of biological role, one of the primary rRNA binding proteins, it binds directly to 16S rRNA central domain where it helps coordinate assembly of the platform of the 30S subunit. This Caldicellulosiruptor bescii (strain ATCC BAA-1888 / DSM 6725 / KCTC 15123 / Z-1320) (Anaerocellum thermophilum) protein is Small ribosomal subunit protein uS8.